The sequence spans 341 residues: Homeobox protein mls-2 (341 aa).

Disordered stretches follow at residues 1-78 and 139-209; these read MPTS…DSTN and SNPD…TVFS. The segment covering 64-78 has biased composition (polar residues); that stretch reads TTQSSPSASSEDSTN. Over residues 153-166 the composition is skewed to basic and acidic residues; the sequence is KDEKSEGKDGETRD. The segment at residues 201 to 260 is a DNA-binding region (homeobox); it reads KKKTRTVFSRSQVSQLEMMFECKRYLSSQERSNLAQKLHLTETQVKIWFQNRRNKFKRQA.

Belongs to the HMX homeobox family. In terms of tissue distribution, expressed in a subset of head neurons, including AIM and ASK (at protein level).

It is found in the nucleus. Its function is as follows. Transcription factor that binds to the promoter of target genes. Regulates fate specification and/or differentiation of multiple cell types arising from the embryonic mesodermal (M) lineage and the ABp(l/r)paa precursors. In the postembryonic M lineage, regulates cleavage orientation, cell proliferation and cell fate specification. Regulates hlh-1 expression to specify coelomocyte fate in the mesodermal (M) lineage. In AWC neurons, initiates expression of ceh-36, leading to the expression of terminal differentiation genes. Regulates ventral cephalic sheath (CEPsh) glia differentiation and expression of transcription factor hlh-17 in CEPsh glia. Promotes terminal differentiation and morphogenesis of the epithelial duct and pore cells. In the duct cell, cooperates with the EGF-Ras-ERK pathway in turning on the terminal differentiation gene lin-48. This Caenorhabditis elegans protein is Homeobox protein mls-2.